A 297-amino-acid polypeptide reads, in one-letter code: Urease accessory protein UreD (297 aa).

The tract at residues 1-41 (MPQAADIATAPQRPSAPGDVVAAGQPPRARGRAHVSSKRRD) is disordered.

It belongs to the UreD family. In terms of assembly, ureD, UreF and UreG form a complex that acts as a GTP-hydrolysis-dependent molecular chaperone, activating the urease apoprotein by helping to assemble the nickel containing metallocenter of UreC. The UreE protein probably delivers the nickel.

Its subcellular location is the cytoplasm. In terms of biological role, required for maturation of urease via the functional incorporation of the urease nickel metallocenter. In Ruegeria sp. (strain TM1040) (Silicibacter sp.), this protein is Urease accessory protein UreD.